A 225-amino-acid chain; its full sequence is Reticulon-like protein B9 (225 aa).

The Reticulon domain occupies 39 to 224 (VADILLWREP…PRGTVKNKKF (186 aa)). The next 3 helical transmembrane spans lie at 50-70 (IAAT…VVEY), 72-92 (FITL…IWST), and 152-172 (YIVS…IGFV).

Its subcellular location is the endoplasmic reticulum membrane. This Arabidopsis thaliana (Mouse-ear cress) protein is Reticulon-like protein B9 (RTNLB9).